A 220-amino-acid chain; its full sequence is MKHSSGLIVFDMDSTLIHIECIDEIARLNNRYTKVSAITEAAMRGEIDFAESLTQRVACLEGIKESDLESLFSPIPFNPGAKELIQALQAAGWKTALVSGGFTWFANRVQAALNLDAVVANQLEVADGCLTGKVLGDIVDAQVKAEQLQQLAGHWNIPPDRTVAVGDGANDGLMLKAAAVGIAFNAKPALQAIADYSVNSNNLLEILGCLKQSELIEPVI.

The active-site Nucleophile is the aspartate 11. Aspartate 11 and aspartate 13 together coordinate Mg(2+). The active-site Proton donor is aspartate 13. Residues glutamate 20, arginine 56, 99–100 (SG), and lysine 144 contribute to the substrate site. Aspartate 167 is a Mg(2+) binding site. A substrate-binding site is contributed by asparagine 170.

This sequence belongs to the HAD-like hydrolase superfamily. SerB family. Mg(2+) is required as a cofactor.

It carries out the reaction O-phospho-L-serine + H2O = L-serine + phosphate. The catalysed reaction is O-phospho-D-serine + H2O = D-serine + phosphate. The protein operates within amino-acid biosynthesis; L-serine biosynthesis; L-serine from 3-phospho-D-glycerate: step 3/3. This Idiomarina loihiensis (strain ATCC BAA-735 / DSM 15497 / L2-TR) protein is Phosphoserine phosphatase.